The primary structure comprises 666 residues: Protein SLY1 (666 aa).

4 repeat units span residues 106-142 (KENI…DLAQ), 220-257 (KGGP…DSLE), 436-474 (LDIL…QNVE), and 478-514 (KEND…DGSD). Positions 106-514 (KENIDIIVND…QNKSLEDGSD (409 aa)) are 4 X approximate repeats.

Belongs to the STXBP/unc-18/SEC1 family. Interacts with SED5.

It localises to the cytoplasm. It is found in the membrane. Able to suppress the functional loss of YPT1. SLY1 is essential for cell viability. May interact indirectly, or directly with YPT1. In Saccharomyces cerevisiae (strain ATCC 204508 / S288c) (Baker's yeast), this protein is Protein SLY1 (SLY1).